The chain runs to 126 residues: Protein C10 (126 aa).

N-acetylalanine is present on Ala-2.

The protein belongs to the UPF0456 family. Ubiquitously expressed, with higher expression in lung.

The protein localises to the cytoplasm. In terms of biological role, in brain, may be required for corpus callosum development. This is Protein C10 (Grcc10) from Mus musculus (Mouse).